A 688-amino-acid chain; its full sequence is Collagen alpha-2(IX) chain (688 aa).

Positions Met1 to Ala22 are cleaved as a signal peptide. Residues Gly26–Ile162 are triple-helical region 4 (COL4). Disordered stretches follow at residues Gly26 to Ser520, Gly549 to Arg578, and Ile590 to Phe662. 2 stretches are compositionally biased toward pro residues: residues Glu30–Val42 and Leu105–Val126. Residues Leu128–Lys138 show a composition bias toward low complexity. The span at Pro143–Pro156 shows a compositional bias: pro residues. The residue at position 159 (Pro159) is a 4-hydroxyproline. Positions Gln163 to Ala179 are nonhelical region 4 (NC4). O-linked (Xyl...) (glycosaminoglycan) serine glycosylation is present at Ser168. The segment at Gly180 to Asp518 is triple-helical region 3 (COL3). At Lys182 the chain carries 5-hydroxylysine. An O-linked (Gal...) hydroxylysine glycan is attached at Lys182. 2 stretches are compositionally biased toward low complexity: residues Lys251–Glu265 and Pro394–Pro412. Residues Gly435 to Gly444 show a composition bias toward gly residues. The span at Arg497 to Pro506 shows a compositional bias: low complexity. A nonhelical region 3 (NC3) region spans residues Ala519 to Leu548. The triple-helical region 2 (COL2) stretch occupies residues Gly549–Ala631. Over residues Pro556 to Tyr565 the composition is skewed to pro residues. Residues Lys598 to Arg610 are compositionally biased toward basic and acidic residues. The nonhelical region 2 (NC2) stretch occupies residues Ile632 to Asn633. The segment at Gly634 to Cys663 is triple-helical region 1 (COL1). Residues Ala641 to Pro651 show a composition bias toward low complexity. Residues Glu664–Pro688 form a nonhelical region 1 (NC1) region.

The protein belongs to the fibril-associated collagens with interrupted helices (FACIT) family. In terms of assembly, heterotrimer of an alpha 1(IX), an alpha 2(IX) and an alpha 3(IX) chain. The chains are linked to each other by interchain disulfide bonds. Trimers are also cross-linked via hydroxylysines. Prolines at the third position of the tripeptide repeating unit (G-X-Y) are hydroxylated in some or all of the chains. Post-translationally, covalently linked to the telopeptides of type II collagen by hydroxylysine-derived cross-links.

It localises to the secreted. The protein localises to the extracellular space. The protein resides in the extracellular matrix. Its function is as follows. Structural component of hyaline cartilage and vitreous of the eye. The polypeptide is Collagen alpha-2(IX) chain (Bos taurus (Bovine)).